Here is a 123-residue protein sequence, read N- to C-terminus: uncharacterized protein (123 aa).

Residues K31–E57 show a composition bias toward basic and acidic residues. Positions K31–K58 are disordered. The chain crosses the membrane as a helical span at residues I91–I111.

The protein localises to the membrane. This is an uncharacterized protein from Mycoplasma genitalium (strain ATCC 33530 / DSM 19775 / NCTC 10195 / G37) (Mycoplasmoides genitalium).